The sequence spans 462 residues: L-seryl-tRNA(Sec) selenium transferase (462 aa).

Residue Lys292 is modified to N6-(pyridoxal phosphate)lysine.

It belongs to the SelA family. It depends on pyridoxal 5'-phosphate as a cofactor.

The protein resides in the cytoplasm. The enzyme catalyses L-seryl-tRNA(Sec) + selenophosphate + H(+) = L-selenocysteinyl-tRNA(Sec) + phosphate. It functions in the pathway aminoacyl-tRNA biosynthesis; selenocysteinyl-tRNA(Sec) biosynthesis; selenocysteinyl-tRNA(Sec) from L-seryl-tRNA(Sec) (bacterial route): step 1/1. Converts seryl-tRNA(Sec) to selenocysteinyl-tRNA(Sec) required for selenoprotein biosynthesis. This is L-seryl-tRNA(Sec) selenium transferase from Geotalea daltonii (strain DSM 22248 / JCM 15807 / FRC-32) (Geobacter daltonii).